The following is a 286-amino-acid chain: 33 kDa chaperonin (286 aa).

Intrachain disulfides connect Cys236–Cys238 and Cys264–Cys267.

The protein belongs to the HSP33 family. Under oxidizing conditions two disulfide bonds are formed involving the reactive cysteines. Under reducing conditions zinc is bound to the reactive cysteines and the protein is inactive.

Its subcellular location is the cytoplasm. Functionally, redox regulated molecular chaperone. Protects both thermally unfolding and oxidatively damaged proteins from irreversible aggregation. Plays an important role in the bacterial defense system toward oxidative stress. This chain is 33 kDa chaperonin, found in Carboxydothermus hydrogenoformans (strain ATCC BAA-161 / DSM 6008 / Z-2901).